The primary structure comprises 467 residues: Transcription factor fos-1 (467 aa).

Low complexity predominate over residues 1–22 (MFEQPSSTTNTTTSSGSGSDSN). 2 disordered regions span residues 1–38 (MFEQ…QAHP) and 139–179 (QYST…AAAR). One can recognise a bZIP domain in the interval 163–226 (DDKRLKRRQR…NSLKNYLETH (64 aa)). The tract at residues 165-205 (KRLKRRQRNKEAAARCRQRRIDLMKELQDQVNDFKNSNDKK) is basic motif. The segment at 212 to 219 (IRNKLNSL) is leucine-zipper. Disordered stretches follow at residues 266-291 (RADS…PVED) and 395-467 (QPIT…LRPL). A compositionally biased stretch (low complexity) spans 273–286 (SIRSGHSSSSSEQH). Over residues 434 to 454 (SSNTGLTPSGQPTMNFVSTPT) the composition is skewed to polar residues. Residues Thr-440, Thr-452, and Thr-454 each carry the phosphothreonine modification.

It belongs to the bZIP family. Fos subfamily. As to quaternary structure, homodimer. Heterodimer; with jun-1. Interacts with kgb-1 and hda-1. May be phosphorylated by kgb-1. Phosphorylation at Thr-440 increases sensitivity to heavy metal stress. Phosphorylation inhibits homodimer formation, and promotes association with target promoters. Expressed in anchor cells. Isoform a is expressed in somatic gonad cells that neighbor anchor cells. Isoform b is expressed in vulval cells, the uterine cells that neighbor anchor cells and the spermatheca.

It localises to the nucleus. Developmentally regulated transcription factor which binds and recognizes the enhancer DNA sequence 5'-TGA[CG]TCA-3'. Its function is as follows. Plays a role the development of the reproductive system, controlling events including anchor cell (AC) fusion and invasion. Regulates downstream transcriptional targets, including zmp-1, cdh-3, him-4 and mig10b, to promote the removal of the gonadal basement membrane during AC invasion. Regulates aff-1 expression to promote AC fusion. With jun-1 regulates egl-1 and lin-12 expression to allow uterine cell specification and development. Functionally, required for ovulation. Controls plc-1 expression in the spermatheca to regulate spermathecal valve dilation. Acts with hda-1 as a downstream repressor of the kgb-1 mediated stress response pathway that transcriptionally represses genes involved in the response to heavy metals, such as kreg-1. This chain is Transcription factor fos-1, found in Caenorhabditis elegans.